Here is a 150-residue protein sequence, read N- to C-terminus: Probable deoxyuridine 5'-triphosphate nucleotidohydrolase (150 aa).

Belongs to the dCTP deaminase family. Archaeal dUTPase subfamily.

It catalyses the reaction dUTP + H2O = dUMP + diphosphate + H(+). It participates in pyrimidine metabolism; dUMP biosynthesis; dUMP from dCTP (dUTP route): step 2/2. Functionally, this enzyme is involved in nucleotide metabolism: it produces dUMP, the immediate precursor of thymidine nucleotides and it decreases the intracellular concentration of dUTP so that uracil cannot be incorporated into DNA. The chain is Probable deoxyuridine 5'-triphosphate nucleotidohydrolase from Methanothermobacter thermautotrophicus (strain ATCC 29096 / DSM 1053 / JCM 10044 / NBRC 100330 / Delta H) (Methanobacterium thermoautotrophicum).